We begin with the raw amino-acid sequence, 819 residues long: DNA topoisomerase 4 subunit A (819 aa).

The Topo IIA-type catalytic domain maps to 30–496 (LPDIRDGLKP…QIIEIDTASL (467 aa)). Tyr-118 serves as the catalytic O-(5'-phospho-DNA)-tyrosine intermediate.

It belongs to the type II topoisomerase GyrA/ParC subunit family. ParC type 2 subfamily. As to quaternary structure, heterotetramer composed of ParC and ParE.

Its subcellular location is the cell membrane. It carries out the reaction ATP-dependent breakage, passage and rejoining of double-stranded DNA.. Functionally, topoisomerase IV is essential for chromosome segregation. It relaxes supercoiled DNA. Performs the decatenation events required during the replication of a circular DNA molecule. This Streptococcus pyogenes serotype M18 (strain MGAS8232) protein is DNA topoisomerase 4 subunit A.